The chain runs to 310 residues: Malate dehydrogenase (310 aa).

NAD(+) contacts are provided by residues 7-13 (GAAGGIG) and D34. R81 and R87 together coordinate substrate. NAD(+) is bound by residues N94 and 117 to 119 (ITN). Residues N119 and R153 each coordinate substrate. H177 acts as the Proton acceptor in catalysis. Residue M227 coordinates NAD(+).

This sequence belongs to the LDH/MDH superfamily. MDH type 1 family. Homodimer.

The enzyme catalyses (S)-malate + NAD(+) = oxaloacetate + NADH + H(+). Functionally, catalyzes the reversible oxidation of malate to oxaloacetate. The polypeptide is Malate dehydrogenase (Vibrio vulnificus (strain YJ016)).